The chain runs to 1148 residues: MGELSPVCLYLLLQGLLLCNTGAARNLNELKMECPHTIRLGQGLVVGSVELPSLPIQQVETLKLESSCNFDLHTSTAGQQSFTKWTWEIKGDLAENTQASSTSFQTKSSEVNLRGLCLIPTLVVETAARMRKTIACYDLSCNQTVCQPTVYLMGPIQTCITTKSCLLSLGDQRIQVNYEKTYCVSGDLVEGICFNPIHTMALSQPSHTYDIMTMMVRCFLVIKKVTSGDSMKIEKNFETLVQKNGCTANNFQGYYICLIGSSSEPLYVPALDDYRSAEVLSRMAFAPHGEDHDIEKNAVSAMRIAGKVTGKVPSTESSDTVQGIAFSGSPLYTSTGVLTSKDDPVYIWAPGIIMEGNHSICEKKTLPLTWTGFISLPGEIEKTTQCTVFCTLAGPGADCEAYSETGIFNISSPTCLINRVQRFRGSEQQIKFVCQRVDMDITVYCNGMKKVILTKTLVIGQCIYTFTSIFSLIPGVAHSLAVELCVPGLHGWATMLLLLTFCFGWVLIPTITMILLKILIAFAYLCSKYNTDSKFRILIEKVKREYQKTMGSMVCEVCQYECETAKELESHRKSCSIGSCPYCLNPSEATTSALQAHFKVCKLRSRFQENLRKSLTVYEPMQGCYRTLSLFRYRSRFFVGLVWCVLLVHHLIVWAASAETQNLNAGWTDTAHGSRIIPMKTDLELDFSLQSSASYTYRRQLQNPANEQEKIPFHLQLSKQVIHAEIQHLGHWMDATFNLKTAFHCYGSCEKYAYPWQTAGCFIEKDYEYETGWGCNPPDCPGVGTGCTACGVYLDKLKSVGKVFKIVSLRYTRKVCIQLGTEQTCKTVDSNDCLITTSVKVCLIGTISKFQPSDTLLFLGPLQQGGLIFKQWCTTTCQFGDPGDIMSTPTGMKCPELNGSFRKKCAFATTPVCQFDGNTISGYKRMIATKDSFQSFNVTEPHISTSALEWIDPDSSLRDHINVIVSRDLSFQDLSETPCQIDLATASIDGAWGSGVGFNLVCTVSLTECSAFLTSIKACDAAMCYGSTTANLVRGQNTIHIVGKGGHSGSKFMCCHDTKCSSTGLVAAAPHLDRVTPYNQADSDKIFDDGAPECGMSCWFKKSGEWILGVLNGNWMVVAVLVVLLILSILLFTLCCPRRPSYRKEHKP.

The N-terminal stretch at 1–23 (MGELSPVCLYLLLQGLLLCNTGA) is a signal peptide. The Lumenal segment spans residues 24–495 (ARNLNELKME…VPGLHGWATM (472 aa)). Cystine bridges form between Cys-34–Cys-159, Cys-68–Cys-165, Cys-117–Cys-136, Cys-141–Cys-146, Cys-183–Cys-193, and Cys-218–Cys-257. A glycan (N-linked (GlcNAc...) asparagine; by host) is linked at Asn-142. Residue Asn-357 is glycosylated (N-linked (GlcNAc...) asparagine; by host). Intrachain disulfides connect Cys-386-Cys-445, Cys-390-Cys-399, Cys-415-Cys-434, and Cys-462-Cys-485. Asn-409 is a glycosylation site (N-linked (GlcNAc...) asparagine; by host). Residues 496–516 (LLLLTFCFGWVLIPTITMILL) form a helical membrane-spanning segment. Residues 517-637 (KILIAFAYLC…LSLFRYRSRF (121 aa)) are Cytoplasmic-facing. Positions 526–543 (CSKYNTDSKFRILIEKVK) are binding to the ribonucleoprotein. 2 CCHC-type zinc fingers span residues 555–575 (CEVC…RKSC) and 580–601 (CPYC…FKVC). Binding to the ribonucleoprotein stretches follow at residues 598–615 (FKVC…RKSL), 602–613 (KLRSRFQENLRK), and 621–635 (MQGC…RYRS). Residues 621 to 644 (MQGCYRTLSLFRYRSRFFVGLVWC) enclose the ITAM domain. The YxxL signature appears at 625–628 (YRTL). A helical membrane pass occupies residues 638–658 (FVGLVWCVLLVHHLIVWAASA). Residues 659–1114 (ETQNLNAGWT…EWILGVLNGN (456 aa)) lie on the Lumenal side of the membrane. Cystine bridges form between Cys-745–Cys-780, Cys-749–Cys-787, Cys-761–Cys-894, Cys-775–Cys-905, Cys-790–Cys-913, Cys-816–Cys-825, Cys-833–Cys-842, and Cys-873–Cys-877. A fusion loop region spans residues 767–787 (YEYETGWGCNPPDCPGVGTGC). N-linked (GlcNAc...) asparagine; by host glycosylation is present at Asn-937. Disulfide bonds link Cys-979–Cys-1009, Cys-1002–Cys-1054, Cys-1019–Cys-1024, Cys-1055–Cys-1060, and Cys-1094–Cys-1098. The helical transmembrane segment at 1115 to 1135 (WMVVAVLVVLLILSILLFTLC) threads the bilayer. Binding to the ribonucleoprotein stretches follow at residues 1131–1143 (LFTL…PSYR) and 1131–1148 (LFTL…EHKP). Residues 1136–1148 (CPRRPSYRKEHKP) are Cytoplasmic-facing.

This sequence belongs to the hantavirus envelope glycoprotein family. In terms of assembly, homodimer. Homotetramer; forms heterotetrameric Gn-Gc spikes in the pre-fusion conformation. Interacts (via C-terminus) with the nucleoprotein. Interacts with host TUFM; this interaction contributes to the virus-induced degradation of mitochondria by autophagy, which leads to degradation of host MAVS and inhibition of type I interferon (IFN) responses. Interacts with host MAP1LC3B; this interaction contributes to the virus-induced degradation of mitochondria by autophagy, which leads to degradation of host MAVS and inhibition of type I interferon (IFN) responses. As to quaternary structure, homodimer. Homotetramer; forms heterotetrameric Gn-Gc spikes in the pre-fusion conformation. Homotrimer; forms homotrimer in the post-fusion conformation at acidic pH. Interacts (via C-terminus) with the nucleoprotein. Post-translationally, envelope polyprotein precursor is quickly cleaved in vivo just after synthesis, presumably by host signal peptidase.

Its subcellular location is the virion membrane. It is found in the host cell surface. The protein localises to the host Golgi apparatus membrane. It localises to the host endoplasmic reticulum membrane. The protein resides in the host mitochondrion. In terms of biological role, forms homotetramers with glycoprotein C at the surface of the virion. Attaches the virion to host cell receptors including integrin ITGAV/ITGB3. This attachment induces virion internalization predominantly through clathrin-dependent endocytosis. Mediates the assembly and budding of infectious virus particles through its interaction with the nucleocapsid protein and the viral genome. May dysregulate normal immune and endothelial cell responses through an ITAM motif. Translocates to mitochondria, binds to host TUFM and recruits MAP1LC3B. These interactions induce mitochondrial autophagy and therefore destruction of host MAVS leading to inhibition of type I interferon (IFN) responses. Concomitant breakdown of glycoprotein N is apparently prevented by the nucleoprotein that may inhibit Gn-stimulated autophagosome-lysosome fusion. Interacts with the viral genomic RNA. Forms homotetramers with glycoprotein N at the surface of the virion. Attaches the virion to host cell receptors including integrin ITGAV/ITGB3. This attachment induces virion internalization predominantly through clathrin-dependent endocytosis. Class II fusion protein that promotes fusion of viral membrane with host endosomal membrane after endocytosis of the virion. This Homo sapiens (Human) protein is Envelopment polyprotein (GP).